The chain runs to 145 residues: D-aminoacyl-tRNA deacylase (145 aa).

Residues 137 to 138 (GP) carry the Gly-cisPro motif, important for rejection of L-amino acids motif.

This sequence belongs to the DTD family. In terms of assembly, homodimer.

The protein localises to the cytoplasm. The catalysed reaction is glycyl-tRNA(Ala) + H2O = tRNA(Ala) + glycine + H(+). The enzyme catalyses a D-aminoacyl-tRNA + H2O = a tRNA + a D-alpha-amino acid + H(+). In terms of biological role, an aminoacyl-tRNA editing enzyme that deacylates mischarged D-aminoacyl-tRNAs. Also deacylates mischarged glycyl-tRNA(Ala), protecting cells against glycine mischarging by AlaRS. Acts via tRNA-based rather than protein-based catalysis; rejects L-amino acids rather than detecting D-amino acids in the active site. By recycling D-aminoacyl-tRNA to D-amino acids and free tRNA molecules, this enzyme counteracts the toxicity associated with the formation of D-aminoacyl-tRNA entities in vivo and helps enforce protein L-homochirality. The sequence is that of D-aminoacyl-tRNA deacylase from Pectobacterium atrosepticum (strain SCRI 1043 / ATCC BAA-672) (Erwinia carotovora subsp. atroseptica).